A 65-amino-acid polypeptide reads, in one-letter code: UPF0434 protein BRADO0313 (65 aa).

The protein belongs to the UPF0434 family.

The sequence is that of UPF0434 protein BRADO0313 from Bradyrhizobium sp. (strain ORS 278).